Consider the following 235-residue polypeptide: Large ribosomal subunit protein uL4 (235 aa).

The disordered stretch occupies residues 45–75 (RAGTASTKTRGEVSGGGRKPWPQKHTGRARH). Basic residues predominate over residues 65–75 (WPQKHTGRARH).

The protein belongs to the universal ribosomal protein uL4 family. Part of the 50S ribosomal subunit.

Functionally, one of the primary rRNA binding proteins, this protein initially binds near the 5'-end of the 23S rRNA. It is important during the early stages of 50S assembly. It makes multiple contacts with different domains of the 23S rRNA in the assembled 50S subunit and ribosome. In terms of biological role, forms part of the polypeptide exit tunnel. The sequence is that of Large ribosomal subunit protein uL4 from Thermotoga petrophila (strain ATCC BAA-488 / DSM 13995 / JCM 10881 / RKU-1).